A 383-amino-acid polypeptide reads, in one-letter code: Plant intracellular Ras-group-related LRR protein 8 (383 aa).

LRR repeat units lie at residues 56 to 79 (RQNI…SINL), 80 to 102 (ASIS…LVAR), 104 to 126 (LNLW…IGCL), 127 to 149 (SKLK…IEDC), 151 to 173 (SLEE…GFEL), 174 to 197 (TNLT…SYLT), 199 to 219 (LRVL…LENL), 221 to 244 (NLQV…VGLL), 245 to 268 (ISLV…GCLR), and 270 to 290 (IQKL…VVEQ). The short motif at 291–298 (GLEALKQY) is the GVYW; degenerate element.

It belongs to the SHOC2 family. As to expression, widely expressed except flowers.

Its function is as follows. Leucine-rich repeat protein that likely mediates protein interactions, possibly in the context of signal transduction. The protein is Plant intracellular Ras-group-related LRR protein 8 (PIRL8) of Arabidopsis thaliana (Mouse-ear cress).